Consider the following 555-residue polypeptide: Efflux pump FUS6 (555 aa).

The interval 1–23 (MASAKDAQPAPEKSLSSDPQPEP) is disordered. The next 5 helical transmembrane spans lie at 31–51 (WLIF…TSII), 67–87 (LYVW…PIFA), 97–117 (SLTL…GGAH), 130–150 (GIGG…MVSI), and 159–179 (IIGG…GAFA). Asn-181 carries N-linked (GlcNAc...) asparagine glycosylation. 3 helical membrane-spanning segments follow: residues 186–206 (WIFY…GLFL), 225–245 (WGGS…LSWG), and 253–273 (GWQT…FFAY). N-linked (GlcNAc...) asparagine glycosylation is present at Asn-291. Helical transmembrane passes span 297–317 (LLVI…FLPV), 332–352 (VMLF…GITI), 360–380 (VWHF…TLLD), 393–413 (ILFG…ILAS), 425–445 (AWTF…AAVF), and 501–521 (KVVW…CFFV). Asn-545 carries N-linked (GlcNAc...) asparagine glycosylation.

The protein belongs to the major facilitator superfamily. TCR/Tet family.

Its subcellular location is the membrane. In terms of biological role, efflux pump; part of the gene cluster that mediates the biosynthesis of the mycotoxin fusarin C. Within the cluster, FUS1, FUS2, FUS8 and FUS9 are sufficient for fusarin production. The other FUS cluster members are not essential for fusarin C biosynthesis. The polypeptide is Efflux pump FUS6 (Gibberella fujikuroi (strain CBS 195.34 / IMI 58289 / NRRL A-6831) (Bakanae and foot rot disease fungus)).